Here is a 334-residue protein sequence, read N- to C-terminus: Phosphate acyltransferase (334 aa).

This sequence belongs to the PlsX family. Homodimer. Probably interacts with PlsY.

The protein localises to the cytoplasm. The enzyme catalyses a fatty acyl-[ACP] + phosphate = an acyl phosphate + holo-[ACP]. It functions in the pathway lipid metabolism; phospholipid metabolism. Its function is as follows. Catalyzes the reversible formation of acyl-phosphate (acyl-PO(4)) from acyl-[acyl-carrier-protein] (acyl-ACP). This enzyme utilizes acyl-ACP as fatty acyl donor, but not acyl-CoA. This is Phosphate acyltransferase from Caldicellulosiruptor saccharolyticus (strain ATCC 43494 / DSM 8903 / Tp8T 6331).